The following is a 955-amino-acid chain: Glycine dehydrogenase (decarboxylating) (955 aa).

Lys-705 carries the post-translational modification N6-(pyridoxal phosphate)lysine.

The protein belongs to the GcvP family. As to quaternary structure, the glycine cleavage system is composed of four proteins: P, T, L and H. Pyridoxal 5'-phosphate is required as a cofactor.

It catalyses the reaction N(6)-[(R)-lipoyl]-L-lysyl-[glycine-cleavage complex H protein] + glycine + H(+) = N(6)-[(R)-S(8)-aminomethyldihydrolipoyl]-L-lysyl-[glycine-cleavage complex H protein] + CO2. Its function is as follows. The glycine cleavage system catalyzes the degradation of glycine. The P protein binds the alpha-amino group of glycine through its pyridoxal phosphate cofactor; CO(2) is released and the remaining methylamine moiety is then transferred to the lipoamide cofactor of the H protein. The chain is Glycine dehydrogenase (decarboxylating) from Aliivibrio salmonicida (strain LFI1238) (Vibrio salmonicida (strain LFI1238)).